The following is a 184-amino-acid chain: Glucosamine 6-phosphate N-acetyltransferase (184 aa).

One can recognise an N-acetyltransferase domain in the interval L39–K184. Residues T61, K108–H111, and E120–V122 each bind substrate. G130 to K135 contacts acetyl-CoA. Y151–K152 contributes to the substrate binding site. Acetyl-CoA is bound at residue Y165–K167. Residues E175 and R181 each contribute to the substrate site.

It belongs to the acetyltransferase family. GNA1 subfamily. In terms of assembly, homodimer. As to expression, ubiquitous. Shows a strong differential expression pattern in adult hematopoietic precursor cells.

The protein localises to the golgi apparatus membrane. It localises to the endosome membrane. It carries out the reaction D-glucosamine 6-phosphate + acetyl-CoA = N-acetyl-D-glucosamine 6-phosphate + CoA + H(+). Its pathway is nucleotide-sugar biosynthesis; UDP-N-acetyl-alpha-D-glucosamine biosynthesis; N-acetyl-alpha-D-glucosamine 1-phosphate from alpha-D-glucosamine 6-phosphate (route I): step 1/2. This chain is Glucosamine 6-phosphate N-acetyltransferase (Gnpnat1), found in Mus musculus (Mouse).